A 452-amino-acid polypeptide reads, in one-letter code: MADNTPTTANDLLNDATQAAAKSPEEIAKENDLLPKLITHLDRHLIFPLLQFVGDQDDEPSPEITKAKFELLKKTNMTDYVASLHCEIEGVDEAPKEYANKRQEILQRLEIFGQESEKITDLLGREDVVTGLRSDKVANLEFLKKEHDVTIEMVNVLYDFGNFQYSCGNYGAAAELLYQFRVLSTDDDKVTAATWGKLACEILTGNWESAMEEVQKVKESIETKLFNKPLAQLHHRTWLIHWALFPFFNHEPARDVICDLFFSPAFINTIQTACPWILRYLTAAVITNRNRTRNTGQYQKQLKDIIRIVKQENYEYSDPVTDFIKALYLDFDFEEAQKKLSEAEEVLRSDFFLVAASENFVEAARHLISESYCKIHQRIDIKDLSARLGLNQDDGEKWIVNLIRDTRVDAKIDYKEGTVVMNHPPSSVYQQVIERTKGGFFRTQVLSAAVAK.

The span at 1–17 (MADNTPTTANDLLNDAT) shows a compositional bias: polar residues. Residues 1-23 (MADNTPTTANDLLNDATQAAAKS) form a disordered region. The 181-residue stretch at 246-426 (PFFNHEPARD…GTVVMNHPPS (181 aa)) folds into the PCI domain.

This sequence belongs to the eIF-3 subunit E family. In terms of assembly, component of the eukaryotic translation initiation factor 3 (eIF-3) complex.

Its subcellular location is the cytoplasm. Component of the eukaryotic translation initiation factor 3 (eIF-3) complex, which is involved in protein synthesis of a specialized repertoire of mRNAs and, together with other initiation factors, stimulates binding of mRNA and methionyl-tRNAi to the 40S ribosome. The eIF-3 complex specifically targets and initiates translation of a subset of mRNAs involved in cell proliferation. In Botryotinia fuckeliana (strain B05.10) (Noble rot fungus), this protein is Eukaryotic translation initiation factor 3 subunit E (int6).